The primary structure comprises 252 residues: Imidazole glycerol phosphate synthase subunit HisF (252 aa).

Catalysis depends on residues aspartate 11 and aspartate 130.

It belongs to the HisA/HisF family. In terms of assembly, heterodimer of HisH and HisF.

Its subcellular location is the cytoplasm. It catalyses the reaction 5-[(5-phospho-1-deoxy-D-ribulos-1-ylimino)methylamino]-1-(5-phospho-beta-D-ribosyl)imidazole-4-carboxamide + L-glutamine = D-erythro-1-(imidazol-4-yl)glycerol 3-phosphate + 5-amino-1-(5-phospho-beta-D-ribosyl)imidazole-4-carboxamide + L-glutamate + H(+). Its pathway is amino-acid biosynthesis; L-histidine biosynthesis; L-histidine from 5-phospho-alpha-D-ribose 1-diphosphate: step 5/9. IGPS catalyzes the conversion of PRFAR and glutamine to IGP, AICAR and glutamate. The HisF subunit catalyzes the cyclization activity that produces IGP and AICAR from PRFAR using the ammonia provided by the HisH subunit. This is Imidazole glycerol phosphate synthase subunit HisF from Syntrophomonas wolfei subsp. wolfei (strain DSM 2245B / Goettingen).